Consider the following 797-residue polypeptide: Sodium/hydrogen exchanger 4 (797 aa).

Over 1–13 (MGPAMFMAFRLWN) the chain is Cytoplasmic. The name=A/M1 intramembrane region spans 14–28 (WLLLLAVLTRSEATS). Residues 29-69 (YVNESSNPTAQQAPDARFAASSSDPDEGISVFELDYDYVQI) lie on the Cytoplasmic side of the membrane. A disordered region spans residues 32-52 (ESSNPTAQQAPDARFAASSSD). Positions 70–90 (PYEVTLWILLASLAKIGFHLY) form an intramembrane region, name=B/M2. Residues 91–94 (HRLP) lie on the Cytoplasmic side of the membrane. The chain crosses the membrane as a helical span at residues 95–114 (HLMPESCLLIIVGALVGGII). Residues 115–127 (FGTHHKSPPVMDS) are Extracellular-facing. The helical transmembrane segment at 128-148 (SIYFLYLLPPIVLESGYFMPT) threads the bilayer. Over 149 to 154 (RPFFEN) the chain is Cytoplasmic. A helical transmembrane segment spans residues 155–175 (IGSILWWAGLGALINAFGIGL). Residues 176 to 194 (SLYFICQIKAFGLGDINLL) lie on the Extracellular side of the membrane. A helical membrane pass occupies residues 195 to 215 (HNLLFGSLISAVDPVAVLAVF). The Cytoplasmic portion of the chain corresponds to 216-226 (EEARVNEQLYM). The helical transmembrane segment at 227-247 (MIFGEALLNDGISVVLYNILI) threads the bilayer. Residues 248-270 (AFTKMHKFEDIEAVDILAGCARF) are Extracellular-facing. Residues 271 to 291 (VIVGCGGVFFGIIFGFISAFI) traverse the membrane as a helical segment. Over 292-304 (TRFTQNISAIEPL) the chain is Cytoplasmic. Residues 305–325 (IVFMFSYLSYLAAETLYLSGI) traverse the membrane as a helical segment. Topologically, residues 326–352 (LAITACAVTMKKYVEENVSQTSYTTIK) are extracellular. N-linked (GlcNAc...) asparagine glycosylation is present at asparagine 342. A helical membrane pass occupies residues 353–373 (YFMKMLSSVSETLIFIFMGVS). Topologically, residues 374-384 (TIGKNHEWNWA) are cytoplasmic. Residues 385 to 405 (FICFTLLFCQIWRAISVFTLF) traverse the membrane as a helical segment. At 406–420 (YVSNQFRTFPFSIKD) the chain is on the extracellular side. Residues 421–441 (QFIIFYSGVRGAGSFSLAFLL) constitute an intramembrane region (name=L). At 442-450 (PLSLFPRKK) the chain is on the extracellular side. Residues 451–471 (LFVTATLVVTYFTVFFQGITI) form a helical membrane-spanning segment. Over 472-797 (GPLVRYLDVR…KSHSPLLHRK (326 aa)) the chain is Cytoplasmic. The span at 759-769 (YDSGEQTEEET) shows a compositional bias: acidic residues. Residues 759–797 (YDSGEQTEEETSAILSRWTAEHRHSTEHHKSHSPLLHRK) are disordered. Residues 783-797 (STEHHKSHSPLLHRK) are compositionally biased toward basic residues.

This sequence belongs to the monovalent cation:proton antiporter 1 (CPA1) transporter (TC 2.A.36) family. As to quaternary structure, homodimer; each protomer has one site for sodium and one site for proton binding. Interacts with CHP1 and CHP2. Post-translationally, may be phosphorylated. In terms of tissue distribution, expressed in kidney. Expressed in uterus and endometrial epithelial cells. Expressed in the inner segments of inner medullary collecting ducts (IMCD) in kidney. Expressed in AGTR1-positive neurons in organum vasculosum of the lamina terminalis (at protein level).

It is found in the basolateral cell membrane. The protein resides in the apical cell membrane. It localises to the zymogen granule membrane. The catalysed reaction is Na(+)(in) + H(+)(out) = Na(+)(out) + H(+)(in). It catalyses the reaction Na(+)(out) + NH4(+)(in) = Na(+)(in) + NH4(+)(out). Its activity is regulated as follows. Up-regulated in response to high extracellular sodium concentration. Its function is as follows. Electroneutral antiporter that exchanges sodium for protons or ammonium ions at the basolateral membrane of epithelia to regulate cell volume and intracellular pH upon hypertonic conditions. As part of transcellular ammonia transport in renal tubules, mediates basolateral ammonium extrusion in the medullary thick ascending limb, regulating the corticopapillary ammonium gradient and overall renal acid excretion. Mediates sodium:proton exchange in gastric parietal cells secondary to cAMP-dependent acid secretion and hyperosmolarity. Possibly coupled to chloride:bicarbonate antiporter, enables loading of parietal cells with sodium and chloride ions to maintain cell volume and normal gastric acid secretion. Functions as a sodium sensor in neurons of organum vasculosum of the lamina terminalis where it regulates water intake in response to increased sodium concentration in body fluids. This is Sodium/hydrogen exchanger 4 (Slc9a4) from Mus musculus (Mouse).